The primary structure comprises 347 residues: NADH-quinone oxidoreductase subunit H (347 aa).

Helical transmembrane passes span L13–I33, G82–I102, V115–G135, I161–V181, F198–L218, F248–I268, F283–I303, and L321–L341.

The protein belongs to the complex I subunit 1 family. NDH-1 is composed of 14 different subunits. Subunits NuoA, H, J, K, L, M, N constitute the membrane sector of the complex.

The protein resides in the cell inner membrane. It catalyses the reaction a quinone + NADH + 5 H(+)(in) = a quinol + NAD(+) + 4 H(+)(out). NDH-1 shuttles electrons from NADH, via FMN and iron-sulfur (Fe-S) centers, to quinones in the respiratory chain. The immediate electron acceptor for the enzyme in this species is believed to be ubiquinone. Couples the redox reaction to proton translocation (for every two electrons transferred, four hydrogen ions are translocated across the cytoplasmic membrane), and thus conserves the redox energy in a proton gradient. This subunit may bind ubiquinone. This Mesorhizobium japonicum (strain LMG 29417 / CECT 9101 / MAFF 303099) (Mesorhizobium loti (strain MAFF 303099)) protein is NADH-quinone oxidoreductase subunit H.